A 1001-amino-acid polypeptide reads, in one-letter code: Kinesin-like protein KIN-14P (1001 aa).

Residues 53–172 enclose the Calponin-homology (CH) domain; sequence AIRRYEAANW…CVLSLRSFSE (120 aa). The span at 284-300 shows a compositional bias: basic and acidic residues; it reads NESVKHALDPNDDKLLS. Residues 284–322 form a disordered region; sequence NESVKHALDPNDDKLLSRADTPPEMESTCTCSTGNMDEE. The Kinesin motor domain maps to 426–748; sequence NIRVYCRVRP…LKFAERVATV (323 aa). 509–516 is an ATP binding site; sequence GQTGSGKT. The stretch at 756–784 forms a coiled coil; the sequence is NKEGGEVKELKEQIACLKAALAKKDGETE. Disordered stretches follow at residues 804–830 and 890–1001; these read PPAF…QKKR and EPQW…SAKK. Residues 972–984 are compositionally biased toward polar residues; that stretch reads PSASTKNGKQLSL.

This sequence belongs to the TRAFAC class myosin-kinesin ATPase superfamily. Kinesin family. KIN-14 subfamily.

The sequence is that of Kinesin-like protein KIN-14P from Oryza sativa subsp. japonica (Rice).